Consider the following 815-residue polypeptide: Kinesin heavy chain (815 aa).

Positions 11–329 (GVQVFCRIRP…LLFGARAKTI (319 aa)) constitute a Kinesin motor domain. 88–95 (GQTSSGKT) provides a ligand contact to ATP. Coiled-coil stretches lie at residues 335 to 374 (INEE…RWRA), 422 to 554 (PITD…LDEC), and 695 to 785 (PAQK…RMNA). Residues 788-815 (IVKPIRPGQVYTSPSAGMSQGAPNGSNA) form a disordered region. Residues 797-815 (VYTSPSAGMSQGAPNGSNA) show a composition bias toward polar residues.

The protein belongs to the TRAFAC class myosin-kinesin ATPase superfamily. Kinesin family. Kinesin subfamily. Oligomer composed of two heavy chains and two light chains.

The protein resides in the cytoplasm. It localises to the cytoskeleton. Microtubule-dependent motor protein required for organelle transport. Plays a role in endosome transport. Required for the transport of mitochondria along the axon of motor neurons. Involved in the nuclear migration of hyp7 hypodermal precursor cells. Required for the formation of dendritic branches of PVD sensory neurons. In non-ciliated neurons such as the PVD and PHC neurons, required for the organization of minus-end out microtubules in dendrites. Also required for the minus-end out orientation of microtubules in dendrites of AQR gas-sensing neurons. Involved in the localization of unc-33 to neurites. Positively regulates cilium position and dendrite morphogenesis in the postembryonic AQR and PQR gas-sensing neurons. Plays a more prominent role in regulating dendrite morphogenesis in AQR than in PQR neurons. Plays a role in regulating the localization of grdn-1 to the distal dendrites of AQR sensory neurons. The polypeptide is Kinesin heavy chain (Caenorhabditis elegans).